The chain runs to 204 residues: ATP synthase subunit 4, mitochondrial (204 aa).

2 helical membrane-spanning segments follow: residues 27-47 (GILATTAAASVYAISSELYVV) and 52-72 (ILLVTFLGFIALISKTVAPLY).

As to quaternary structure, F-type ATP synthases have 2 components, the catalytic core F(1) and the membrane-embedded component F(0), linked together by a central stalk and a peripheral stalk. The central stalk, also called rotor shaft, is often seen as part of F(1). The peripheral stalk is seen as part of F(0). F(0) contains the membrane channel next to the rotor. F-type ATP synthases form dimers but each monomer functions independently in ATP generation. The dimer consists of 18 different polypeptides: ATP1 (subunit alpha, part of F(1), 3 molecules per monomer), ATP2 (subunit beta, part of F(1), 3 molecules per monomer), ATP3 (subunit gamma, part of the central stalk), ATP4 (subunit b, part of the peripheral stalk), ATP5/OSCP (subunit 5/OSCP, part of the peripheral stalk), ATP6 (subunit a, part of the peripheral stalk), ATP7 (subunit d, part of the peripheral stalk), ATP8 (subunit 8, part of the peripheral stalk), OLI1 (subunit c, part of the rotor, 10 molecules per monomer), ATP14 (subunit h, part of the peripheral stalk), ATP15 (subunit epsilon, part of the central stalk), ATP16 (subunit delta, part of the central stalk), ATP17 (subunit f, part of the peripheral stalk), ATP18 (subunit i/j, part of the peripheral stalk). Dimer-specific subunits are ATP19 (subunit k, at interface between monomers), ATP20 (subunit g, at interface between monomers), TIM11 (subunit e, at interface between monomers). Also contains subunit L.

It is found in the mitochondrion inner membrane. Its function is as follows. Mitochondrial membrane ATP synthase (F(1)F(0) ATP synthase or Complex V) produces ATP from ADP in the presence of a proton gradient across the membrane which is generated by electron transport complexes of the respiratory chain. F-type ATP synthases consist of two structural domains, F(1) - containing the extramembraneous catalytic core, and F(0) - containing the membrane proton channel, linked together by a central stalk and a peripheral stalk. During catalysis, ATP synthesis in the catalytic domain of F(1) is coupled via a rotary mechanism of the central stalk subunits to proton translocation. Part of the complex F(0) domain and the peripheral stalk, which acts as a stator to hold the catalytic alpha/ATP1(3)beta/ATP2(3) subcomplex and subunit a/ATP6 static relative to the rotary elements. The sequence is that of ATP synthase subunit 4, mitochondrial from Pichia angusta (Yeast).